The chain runs to 579 residues: Glutamate--tRNA ligase (579 aa).

The 'HIGH' region signature appears at 114–124 (PNPNGPWHIGH).

Belongs to the class-I aminoacyl-tRNA synthetase family. Glutamate--tRNA ligase type 2 subfamily.

Its subcellular location is the cytoplasm. The enzyme catalyses tRNA(Glu) + L-glutamate + ATP = L-glutamyl-tRNA(Glu) + AMP + diphosphate. Its function is as follows. Catalyzes the attachment of glutamate to tRNA(Glu) in a two-step reaction: glutamate is first activated by ATP to form Glu-AMP and then transferred to the acceptor end of tRNA(Glu). This is Glutamate--tRNA ligase from Haloarcula marismortui (strain ATCC 43049 / DSM 3752 / JCM 8966 / VKM B-1809) (Halobacterium marismortui).